The sequence spans 503 residues: Probable cytosol aminopeptidase (503 aa).

Residues K270 and D275 each contribute to the Mn(2+) site. K282 is an active-site residue. Residues D293, D352, and E354 each contribute to the Mn(2+) site. R356 is a catalytic residue.

The protein belongs to the peptidase M17 family. Requires Mn(2+) as cofactor.

Its subcellular location is the cytoplasm. The catalysed reaction is Release of an N-terminal amino acid, Xaa-|-Yaa-, in which Xaa is preferably Leu, but may be other amino acids including Pro although not Arg or Lys, and Yaa may be Pro. Amino acid amides and methyl esters are also readily hydrolyzed, but rates on arylamides are exceedingly low.. It carries out the reaction Release of an N-terminal amino acid, preferentially leucine, but not glutamic or aspartic acids.. Presumably involved in the processing and regular turnover of intracellular proteins. Catalyzes the removal of unsubstituted N-terminal amino acids from various peptides. The sequence is that of Probable cytosol aminopeptidase from Erwinia tasmaniensis (strain DSM 17950 / CFBP 7177 / CIP 109463 / NCPPB 4357 / Et1/99).